We begin with the raw amino-acid sequence, 329 residues long: MQEKSRVFKWDINDFKEKSFKKPTLNLTWDYKFNPHYDEILINENIEWLKGTKLFSNESDYEKFISLKTSYMNAYLYSHGNREVFRYINRLNEYIYIIDDLYLEDSVYGQEWVNQLFDRNSKLFKEDHGSSFLWQIFDDIRSAGNSEATDYLIKKTKEWMDSVILFNSKEVHSNYTFEEYSSYRGVEVGMIFALACTKVHLPPLCDEIENHPLYIELLGKYFNSIQVLINDIHSFNKEIKSSRLGNYVKIAAYQLGSIQSAMDHSQKICNDYIEAMEEKCLELESIFPNNKDLETHLYLIKTIIAGNYYGSKDPNYPRYNGTVCEADYK.

The short motif at 99 to 104 (DDLYLE) is the DDxx(x)D/E motif element. The short motif at 230-238 (NDIHSFNKE) is the NDxxSxxxD/E motif element.

It belongs to the terpene synthase family.

Functionally, terpene synthase that converts its substrate farnesyl diphosphate (FPP) into 6 yet unidentified sesquiterpenes. The sequence is that of Terpene synthase 7 from Dictyostelium purpureum (Slime mold).